The following is a 422-amino-acid chain: Anhydromevalonate phosphate decarboxylase (422 aa).

Mn(2+) contacts are provided by Asn-134 and Glu-197. Residue Asp-244 is the Proton acceptor of the active site.

It belongs to the UbiD family. It depends on prenylated FMN as a cofactor. The cofactor is Mn(2+).

The enzyme catalyses (2E)-3-methyl-5-phosphooxypent-2-enoate + H(+) = isopentenyl phosphate + CO2. The protein operates within isoprenoid biosynthesis; isopentenyl diphosphate biosynthesis via mevalonate pathway. Functionally, catalyzes the conversion of trans-anhydromevalonate 5-phosphate (tAHMP) into isopentenyl phosphate. Involved in the archaeal mevalonate (MVA) pathway, which provides fundamental precursors for isoprenoid biosynthesis, such as isopentenyl diphosphate (IPP) and dimethylallyl diphosphate (DMAPP). The protein is Anhydromevalonate phosphate decarboxylase of Methanosarcina mazei (strain ATCC BAA-159 / DSM 3647 / Goe1 / Go1 / JCM 11833 / OCM 88) (Methanosarcina frisia).